The primary structure comprises 393 residues: S-adenosylmethionine synthase 1 (393 aa).

Residue Glu9 participates in Mg(2+) binding. His15 lines the ATP pocket. Glu43 provides a ligand contact to K(+). Residues Glu56 and Gln99 each coordinate L-methionine. Residues 167–169 (DGK), 235–238 (SGRF), Asp246, 252–253 (RK), Ala269, Lys273, and Lys277 each bind ATP. An L-methionine-binding site is contributed by Asp246. L-methionine is bound at residue Lys277.

This sequence belongs to the AdoMet synthase family. In terms of assembly, homotetramer. Mn(2+) serves as cofactor. Requires Mg(2+) as cofactor. The cofactor is Co(2+). K(+) is required as a cofactor.

The protein localises to the cytoplasm. The catalysed reaction is L-methionine + ATP + H2O = S-adenosyl-L-methionine + phosphate + diphosphate. Its pathway is amino-acid biosynthesis; S-adenosyl-L-methionine biosynthesis; S-adenosyl-L-methionine from L-methionine: step 1/1. Its function is as follows. Catalyzes the formation of S-adenosylmethionine from methionine and ATP. The reaction comprises two steps that are both catalyzed by the same enzyme: formation of S-adenosylmethionine (AdoMet) and triphosphate, and subsequent hydrolysis of the triphosphate. This chain is S-adenosylmethionine synthase 1 (METK1), found in Picea sitchensis (Sitka spruce).